A 7639-amino-acid polypeptide reads, in one-letter code: Nonribosomal peptide synthetase 4 (7639 aa).

The tract at residues 244–636 is adenylation 1; the sequence is WQGAMRPDAE…AGRKDAQIKF (393 aa). A Carrier 1 domain is found at 776–852; sequence TFSNGTESQL…ALARHVKEIE (77 aa). Residue serine 813 is modified to O-(pantetheine 4'-phosphoryl)serine. Positions 865–1295 are epimerization 1; the sequence is FELSPIQRLY…EQNLSLLVES (431 aa). The condensation 1 stretch occupies residues 1337-1767; the sequence is VEDIYPCSPM…HLGPRHHQQI (431 aa). Residues 1786 to 2181 form an adenylation 2 region; it reads FEEQAILRPE…FGRKDTQVKL (396 aa). The 77-residue stretch at 2313 to 2389 folds into the Carrier 2 domain; the sequence is APASDMEKQL…DMAQSALPLS (77 aa). Serine 2350 is subject to O-(pantetheine 4'-phosphoryl)serine. A condensation 2 region spans residues 2426–2852; it reads VEDIYPCTPL…LISTRDYQSL (427 aa). Residues 2878 to 3269 form an adenylation 3 region; sequence QPLDKLAVCA…QGRKDNQVKI (392 aa). Positions 3403 to 3479 constitute a Carrier 3 domain; it reads REATETETKL…KLASFVQAVE (77 aa). Serine 3440 is modified (O-(pantetheine 4'-phosphoryl)serine). An epimerization 2 region spans residues 3491-3928; the sequence is AFPLSPIQKL…RMTQAKAEPQ (438 aa). Residues 3961-4389 form a condensation 3 region; it reads EAVYPCSPVQ…VSDDCAQQLT (429 aa). The tract at residues 4407–4810 is adenylation 4; sequence FERNVQSLPH…VSRKDTQIKL (404 aa). In terms of domain architecture, Carrier 4 spans 4944–5020; that stretch reads APTTMMQRKL…EMATCCGHSE (77 aa). The residue at position 4981 (serine 4981) is an O-(pantetheine 4'-phosphoryl)serine. The segment at 5058-5478 is condensation 4; the sequence is QDLYPCSSLQ…QFCSEEDLQM (421 aa). The interval 5498–5900 is adenylation 5; it reads FWQSVATYHD…IGRKDNQVKL (403 aa). The 77-residue stretch at 6039–6115 folds into the Carrier 5 domain; that stretch reads TDTTFVGQLL…DLVTLIEKEG (77 aa). Serine 6076 is modified (O-(pantetheine 4'-phosphoryl)serine). The interval 6133-6567 is epimerization 3; it reads FALSPIQQLF…EVLGNMAMEL (435 aa). The tract at residues 6607–7032 is condensation 5; that stretch reads VEDMYPCSPM…EALSHLRVSQ (426 aa). One can recognise a Carrier 6 domain in the interval 7088 to 7164; sequence RDKDQVYNKL…TLLNCLRDKS (77 aa). O-(pantetheine 4'-phosphoryl)serine is present on serine 7125. The segment at 7254 to 7603 is condensation 6; it reads LDGEGPLDVA…SNTEVCFLYR (350 aa).

This sequence belongs to the NRP synthetase family.

It carries out the reaction D-allo-threonine + D-leucine + D-alanine + L-proline + 2 L-leucine + A = fusahexin + AH2 + 6 H2O. The protein operates within secondary metabolite biosynthesis. In terms of biological role, nonribosomal peptide synthetase; part of the gene cluster that mediates the biosynthesis of the fusahexin, a cyclic hydrophobic hexapeptide with the amino acid sequence cyclo-(D-Ala-L-Leu-D-allo-Thr-L-Pro-D-Leu-L-Leu) that plays an important role in cell surface hydrophobicity. Fusahexin might also play a role in virulence, sensitivity to osmotic stress and oxidative stress. NRPS4 is the only enzyme within the cluster and its 5 catalytic modules are sufficient to produce fusahexin. The modules 1 to 4 incorporate respectively D-alanine, L-leucine, D-allo-threonine, and L-proline, which is supported by the presence of epimerase domains in modules 1 and 3, which incorporate D-amino acids. The terminal module is responsible for incorporation of the two adjacent leucine units, where the epimerase domain is only used to convert the first unit to D-leucine. The terminal condensation domain (Ct) is involved in cyclization with D-alanine and thereby releasing of fusahexin. This chain is Nonribosomal peptide synthetase 4, found in Gibberella zeae (strain ATCC MYA-4620 / CBS 123657 / FGSC 9075 / NRRL 31084 / PH-1) (Wheat head blight fungus).